Reading from the N-terminus, the 87-residue chain is UPF0250 protein NT01EI_2946 (87 aa).

The protein belongs to the UPF0250 family.

The sequence is that of UPF0250 protein NT01EI_2946 from Edwardsiella ictaluri (strain 93-146).